The chain runs to 501 residues: NAD(P)H-quinone oxidoreductase chain 4, chloroplastic (501 aa).

14 helical membrane-spanning segments follow: residues 5-25 (FPWL…IFFL), 38-58 (ICIC…HFQL), 85-105 (GLSI…TLAA), 112-130 (SRLF…IGSF), 135-155 (LLLF…LLAM), 168-188 (FILY…GIGL), 209-229 (ALEI…LPII), 243-263 (HYST…YGLV), 275-295 (SIFS…AALT), 306-326 (IAYS…SITD), 331-351 (GAIL…FLAG), 387-407 (LALP…GIIT), 417-437 (ILIT…LLSM), and 463-483 (LFVS…PDFV).

The protein belongs to the complex I subunit 4 family.

The protein resides in the plastid. The protein localises to the chloroplast thylakoid membrane. The catalysed reaction is a plastoquinone + NADH + (n+1) H(+)(in) = a plastoquinol + NAD(+) + n H(+)(out). It carries out the reaction a plastoquinone + NADPH + (n+1) H(+)(in) = a plastoquinol + NADP(+) + n H(+)(out). In Eucalyptus globulus subsp. globulus (Tasmanian blue gum), this protein is NAD(P)H-quinone oxidoreductase chain 4, chloroplastic.